The sequence spans 357 residues: MSKRKKLLVMAGGTGGHVFPAIAVAQYLQKQDWDICWLGTRDRMEAKLVPKHGIPIEFIQISGLRGKGLITLLKAPFVILRAVLQARKIIKKYQPDVVLGMGGYVSGPGGVAAKLCNIPVVVHEQNAVLGLTNSLLAKIATRVLQAFPNTFPNAEVVGNPVREAFFSVPMPQERFNTTCETLKVLVVGGSQGAHILNTILPEVLAQLPNRLEIVHQVGSGSVENVTALYHDKVNLTQESVQITEFIDDIAQAYAWADIVICRSGALTVCELAAVGTPAIFVPFQHKDKQQYLNAKYLADVGAAYIVEQHELDAEKIAQLLKNVDKEKLLEMAEKAKNMSTPLSTQRVAEVIMDTVKT.

Residues 14–16 (TGG), asparagine 126, arginine 162, serine 190, isoleucine 246, 265–270 (ALTVCE), and glutamine 290 each bind UDP-N-acetyl-alpha-D-glucosamine.

It belongs to the glycosyltransferase 28 family. MurG subfamily.

It localises to the cell inner membrane. It catalyses the reaction di-trans,octa-cis-undecaprenyl diphospho-N-acetyl-alpha-D-muramoyl-L-alanyl-D-glutamyl-meso-2,6-diaminopimeloyl-D-alanyl-D-alanine + UDP-N-acetyl-alpha-D-glucosamine = di-trans,octa-cis-undecaprenyl diphospho-[N-acetyl-alpha-D-glucosaminyl-(1-&gt;4)]-N-acetyl-alpha-D-muramoyl-L-alanyl-D-glutamyl-meso-2,6-diaminopimeloyl-D-alanyl-D-alanine + UDP + H(+). It functions in the pathway cell wall biogenesis; peptidoglycan biosynthesis. Its function is as follows. Cell wall formation. Catalyzes the transfer of a GlcNAc subunit on undecaprenyl-pyrophosphoryl-MurNAc-pentapeptide (lipid intermediate I) to form undecaprenyl-pyrophosphoryl-MurNAc-(pentapeptide)GlcNAc (lipid intermediate II). The protein is UDP-N-acetylglucosamine--N-acetylmuramyl-(pentapeptide) pyrophosphoryl-undecaprenol N-acetylglucosamine transferase of Histophilus somni (strain 129Pt) (Haemophilus somnus).